Consider the following 20-residue polypeptide: Collagenolytic protease 35 kDa 2 (20 aa).

Positions 1–20 (IVGGTEVTPGEIPYQLSFQD) constitute a Peptidase S1 domain. The segment at 1-20 (IVGGTEVTPGEIPYQLSFQD) is disordered.

It belongs to the peptidase S1 family.

The catalysed reaction is Hydrolysis of proteins, with broad specificity for peptide bonds. Native collagen is cleaved about 75% of the length of the molecule from the N-terminus. Low activity on small molecule substrates of both trypsin and chymotrypsin.. Its function is as follows. This enzyme is a serine protease capable of degrading the native triple helix of collagen. This chain is Collagenolytic protease 35 kDa 2, found in Chionoecetes opilio (Atlantic snow crab).